Here is an 840-residue protein sequence, read N- to C-terminus: Probable inorganic carbon transporter subunit DabA (840 aa).

Zn(2+) is bound by residues Cys-355, Asp-357, His-539, and Cys-554.

The protein belongs to the inorganic carbon transporter (TC 9.A.2) DabA family. In terms of assembly, forms a complex with DabB. Zn(2+) is required as a cofactor.

It is found in the cell membrane. Functionally, part of an energy-coupled inorganic carbon pump. This Roseiflexus castenholzii (strain DSM 13941 / HLO8) protein is Probable inorganic carbon transporter subunit DabA.